The chain runs to 110 residues: MTSTRKLSVSCLIVFMVSSLIAVSSGWLSIGKIAIKDGKCDPKNGNLYAIGEKWYNDEDCFEITCVQGDKGSVAQQVASCPVHAVKPGCELVFPGGTYPKCCPYYECPNS.

An N-terminal signal peptide occupies residues 1–26; that stretch reads MTSTRKLSVSCLIVFMVSSLIAVSSG.

It belongs to the scoloptoxin-16 family. Contains 4 disulfide bonds. As to expression, expressed by the venom gland.

It localises to the secreted. The polypeptide is U-scoloptoxin(16)-Er7a (Ethmostigmus rubripes (Giant centipede)).